A 547-amino-acid chain; its full sequence is Glucose-6-phosphate isomerase (547 aa).

E351 serves as the catalytic Proton donor. Residues H382 and K509 contribute to the active site.

This sequence belongs to the GPI family.

The protein resides in the cytoplasm. The enzyme catalyses alpha-D-glucose 6-phosphate = beta-D-fructose 6-phosphate. Its pathway is carbohydrate biosynthesis; gluconeogenesis. It participates in carbohydrate degradation; glycolysis; D-glyceraldehyde 3-phosphate and glycerone phosphate from D-glucose: step 2/4. Functionally, catalyzes the reversible isomerization of glucose-6-phosphate to fructose-6-phosphate. The protein is Glucose-6-phosphate isomerase of Coxiella burnetii (strain Dugway 5J108-111).